Consider the following 657-residue polypeptide: Iron-sulfur cluster biogenesis chaperone, mitochondrial (657 aa).

It belongs to the heat shock protein 70 family. Interacts with the Fe/S cluster assembly proteins ISU1, MGE1, GRX5 and JAC1.

The protein localises to the mitochondrion matrix. It catalyses the reaction ATP + H2O = ADP + phosphate + H(+). Its function is as follows. Required for the assembly of iron-sulfur (Fe/S) clusters in mitochondria. Assisted by the DnaJ-like co-chaperone JAC1 and the nucleotide exchange factor MGE1, it mediates ATP-dependent Fe-S cluster transfer from the scaffold proteins ISU1/ISU2 to GRX5. In Saccharomyces cerevisiae (strain ATCC 204508 / S288c) (Baker's yeast), this protein is Iron-sulfur cluster biogenesis chaperone, mitochondrial.